We begin with the raw amino-acid sequence, 391 residues long: tRNA-specific 2-thiouridylase MnmA (391 aa).

ATP contacts are provided by residues 20 to 27 (AMSGGVDS) and L46. The Nucleophile role is filled by C114. An intrachain disulfide couples C114 to C210. Residue G138 coordinates ATP. The interval 160–162 (RDQ) is interaction with tRNA. C210 serves as the catalytic Cysteine persulfide intermediate.

It belongs to the MnmA/TRMU family.

The protein resides in the cytoplasm. It catalyses the reaction S-sulfanyl-L-cysteinyl-[protein] + uridine(34) in tRNA + AH2 + ATP = 2-thiouridine(34) in tRNA + L-cysteinyl-[protein] + A + AMP + diphosphate + H(+). Catalyzes the 2-thiolation of uridine at the wobble position (U34) of tRNA, leading to the formation of s(2)U34. This Bartonella bacilliformis (strain ATCC 35685 / KC583 / Herrer 020/F12,63) protein is tRNA-specific 2-thiouridylase MnmA.